We begin with the raw amino-acid sequence, 740 residues long: Ribosomal protein S6 kinase alpha-6 (740 aa).

Residues 67-326 (FELLKVLGQG…VEEIKRHTFF (260 aa)) enclose the Protein kinase 1 domain. ATP contacts are provided by residues 73–81 (LGQGSFGKV) and Lys99. Residue Asp192 is the Proton acceptor of the active site. An AGC-kinase C-terminal domain is found at 327 to 396 (STIDWNKLYR…VAPVSLEESK (70 aa)). The Protein kinase 2 domain occupies 420–677 (YELKEDIGVG…AEQVLKHSWI (258 aa)). Residues 426–434 (IGVGSYSIC) and Lys449 contribute to the ATP site. Catalysis depends on Asp537, which acts as the Proton acceptor.

It belongs to the protein kinase superfamily. AGC Ser/Thr protein kinase family. S6 kinase subfamily. As to quaternary structure, forms a complex with either ERK1 or ERK2 in quiescent cells. Transiently dissociates following mitogenic stimulation. Mg(2+) serves as cofactor.

It catalyses the reaction L-seryl-[protein] + ATP = O-phospho-L-seryl-[protein] + ADP + H(+). The enzyme catalyses L-threonyl-[protein] + ATP = O-phospho-L-threonyl-[protein] + ADP + H(+). Its activity is regulated as follows. Activated by multiple phosphorylations on threonine and serine residues. Its function is as follows. Serine/threonine kinase that may play a role in mediating the growth-factor and stress induced activation of the transcription factor CREB. This Danio rerio (Zebrafish) protein is Ribosomal protein S6 kinase alpha-6 (rps6ka6).